A 123-amino-acid polypeptide reads, in one-letter code: Small ribosomal subunit protein uS12c (123 aa).

It belongs to the universal ribosomal protein uS12 family. In terms of assembly, part of the 30S ribosomal subunit.

It localises to the plastid. It is found in the chloroplast. Its function is as follows. With S4 and S5 plays an important role in translational accuracy. Located at the interface of the 30S and 50S subunits. The chain is Small ribosomal subunit protein uS12c (rps12) from Physcomitrium patens (Spreading-leaved earth moss).